The sequence spans 84 residues: Small ribosomal subunit protein bS16 (84 aa).

Belongs to the bacterial ribosomal protein bS16 family.

This chain is Small ribosomal subunit protein bS16, found in Cupriavidus necator (strain ATCC 17699 / DSM 428 / KCTC 22496 / NCIMB 10442 / H16 / Stanier 337) (Ralstonia eutropha).